Here is a 467-residue protein sequence, read N- to C-terminus: Indoleacetamide hydrolase (467 aa).

Active-site charge relay system residues include K74 and S149. Catalysis depends on S173, which acts as the Acyl-ester intermediate.

Belongs to the amidase family.

Its pathway is plant hormone metabolism; auxin biosynthesis. In terms of biological role, hydrolyzes indole-3-acetamide (IAM) into indole-3-acetic acid (IAA). The chain is Indoleacetamide hydrolase (tms2) from Rhizobium radiobacter (Agrobacterium tumefaciens).